The sequence spans 226 residues: Orotate phosphoribosyltransferase 1 (226 aa).

Residue Lys30 coordinates 5-phospho-alpha-D-ribose 1-diphosphate. 38-39 (FF) contributes to the orotate binding site. Residues 76–77 (YK), Arg106, Lys107, Lys110, His112, and 132–140 (DDVMTAGTA) each bind 5-phospho-alpha-D-ribose 1-diphosphate. Orotate is bound by residues Thr136 and Arg164. Phosphoserine occurs at positions 213 and 225.

The protein belongs to the purine/pyrimidine phosphoribosyltransferase family. PyrE subfamily. Homodimer.

The enzyme catalyses orotidine 5'-phosphate + diphosphate = orotate + 5-phospho-alpha-D-ribose 1-diphosphate. It participates in pyrimidine metabolism; UMP biosynthesis via de novo pathway; UMP from orotate: step 1/2. In terms of biological role, catalyzes the transfer of a ribosyl phosphate group from 5-phosphoribose 1-diphosphate to orotate, leading to the formation of orotidine monophosphate (OMP). In Saccharomyces cerevisiae (strain ATCC 204508 / S288c) (Baker's yeast), this protein is Orotate phosphoribosyltransferase 1 (URA5).